We begin with the raw amino-acid sequence, 292 residues long: uncharacterized protein (292 aa).

The segment at 1–213 (MTTAITPDKK…DQDDDDQKDL (213 aa)) is disordered. Composition is skewed to basic residues over residues 27-43 (TKPRRSSKTSKKRKSKK) and 50-78 (AKKRKTKRSKKSAKRTKRSAPKKAPKKAP). Residues 90-100 (QQAQASLQKPI) are compositionally biased toward polar residues. Residues 116 to 134 (PRPPTPIPPTGVKPEPAPR) show a composition bias toward pro residues. Residues 143–158 (SVSSTTPRTSATTGTT) show a composition bias toward low complexity.

This is an uncharacterized protein from Caenorhabditis elegans.